Reading from the N-terminus, the 123-residue chain is ATP synthase epsilon chain (123 aa).

This sequence belongs to the ATPase epsilon chain family. In terms of assembly, F-type ATPases have 2 components, CF(1) - the catalytic core - and CF(0) - the membrane proton channel. CF(1) has five subunits: alpha(3), beta(3), gamma(1), delta(1), epsilon(1). CF(0) has three main subunits: a, b and c.

The protein resides in the cell inner membrane. In terms of biological role, produces ATP from ADP in the presence of a proton gradient across the membrane. The chain is ATP synthase epsilon chain from Helicobacter acinonychis (strain Sheeba).